The primary structure comprises 308 residues: Protein doublecortin (308 aa).

The Doublecortin 1 domain maps to Ala-21–Pro-104. Residues Glu-115–Pro-167 are disordered. Positions Pro-141–Pro-167 are enriched in low complexity. Positions Lys-194–Ser-277 constitute a Doublecortin 2 domain. Residues Glu-282–Phe-308 are disordered. Residues Glu-291–Gln-300 are compositionally biased toward low complexity.

Interacts with lis1.

It is found in the cytoplasm. The protein resides in the cytoskeleton. In terms of biological role, has a cytoskeleton-independent function in chemotactic signaling during development. This Dictyostelium discoideum (Social amoeba) protein is Protein doublecortin (dcx).